Consider the following 344-residue polypeptide: Adenosine kinase 1 (344 aa).

The active site involves aspartate 299.

It belongs to the carbohydrate kinase PfkB family. As to quaternary structure, interacts with the begomovirus AL2 protein and the curtovirus L2 protein. Mg(2+) is required as a cofactor. As to expression, widely expressed.

The catalysed reaction is adenosine + ATP = AMP + ADP + H(+). Its pathway is purine metabolism; AMP biosynthesis via salvage pathway; AMP from adenosine: step 1/1. Inactivated by the begomovirus AL2 protein or the curtovirus L2 protein. ATP dependent phosphorylation of adenosine and other related nucleoside analogs to monophosphate derivatives. Essential to sustain methyl recycling. The chain is Adenosine kinase 1 from Arabidopsis thaliana (Mouse-ear cress).